A 345-amino-acid chain; its full sequence is UPF0228 protein MA_2656 (345 aa).

It belongs to the UPF0228 family.

The protein is UPF0228 protein MA_2656 of Methanosarcina acetivorans (strain ATCC 35395 / DSM 2834 / JCM 12185 / C2A).